A 406-amino-acid polypeptide reads, in one-letter code: Probable UDP-arabinose 4-epimerase 3 (406 aa).

Over 1 to 26 the chain is Cytoplasmic; that stretch reads MIPLNRRASQTRGGMEYFDARRKPHN. A helical; Signal-anchor for type II membrane protein membrane pass occupies residues 27-44; the sequence is VGKVIAALVLTTLCIFIL. Over 45-406 the chain is Lumenal; it reads KQSPGFGGSS…KSHPRGYGSN (362 aa). 65–96 is a binding site for NAD(+); the sequence is HVLVTGGAGYIGSHASLRLLKDNYRVTIVDNL. The active-site Proton acceptor is Tyr-213.

The protein belongs to the NAD(P)-dependent epimerase/dehydratase family. Requires NAD(+) as cofactor.

Its subcellular location is the golgi apparatus. It is found in the golgi stack membrane. The catalysed reaction is UDP-beta-L-arabinopyranose = UDP-alpha-D-xylose. It participates in nucleotide-sugar biosynthesis; UDP-L-arabinose biosynthesis; UDP-L-arabinose from UDP-alpha-D-xylose: step 1/1. It functions in the pathway cell wall biogenesis; cell wall polysaccharide biosynthesis. The protein is Probable UDP-arabinose 4-epimerase 3 (UEL-3) of Oryza sativa subsp. japonica (Rice).